Here is a 1486-residue protein sequence, read N- to C-terminus: Chromosome partition protein MukB (1486 aa).

An ATP-binding site is contributed by Gly-34–Ser-41. Coiled coils occupy residues Leu-326–Gln-418, Leu-444–Gln-480, and Arg-509–Val-603. Residues Pro-666–Arg-783 are flexible hinge. 3 coiled-coil regions span residues Glu-835 to Glu-923, Glu-977 to Ala-1115, and Val-1209 to Ser-1266.

This sequence belongs to the SMC family. MukB subfamily. In terms of assembly, homodimerization via its hinge domain. Binds to DNA via its C-terminal region. Interacts, and probably forms a ternary complex, with MukE and MukF via its C-terminal region. The complex formation is stimulated by calcium or magnesium. Interacts with tubulin-related protein FtsZ.

It localises to the cytoplasm. The protein resides in the nucleoid. Functionally, plays a central role in chromosome condensation, segregation and cell cycle progression. Functions as a homodimer, which is essential for chromosome partition. Involved in negative DNA supercoiling in vivo, and by this means organize and compact chromosomes. May achieve or facilitate chromosome segregation by condensation DNA from both sides of a centrally located replisome during cell division. This is Chromosome partition protein MukB from Escherichia coli (strain ATCC 8739 / DSM 1576 / NBRC 3972 / NCIMB 8545 / WDCM 00012 / Crooks).